We begin with the raw amino-acid sequence, 84 residues long: Delta-conotoxin-like MVIA (84 aa).

Residues 1 to 22 (MKLTCVMIVAVLFLTTWTFVTA) form the signal peptide. Residues 23 to 49 (DDSRYGLKNLFPKARHEMKNPEASKLN) constitute a propeptide that is removed on maturation. Intrachain disulfides connect C54–C69, C61–C73, and C68–C77. P65 bears the 4-hydroxyproline mark. A Serine amide modification is found at S83.

This sequence belongs to the conotoxin O1 superfamily. Expressed by the venom duct.

Its subcellular location is the secreted. Its function is as follows. Delta-conotoxins bind to site 6 of voltage-gated sodium channels (Nav) and inhibit the inactivation process. The chain is Delta-conotoxin-like MVIA from Conus magus (Magical cone).